A 124-amino-acid chain; its full sequence is Transmembrane protein 254 (124 aa).

A run of 3 helical transmembrane segments spans residues 16-36 (LFWV…IFWP), 62-82 (VHAW…YAIV), and 96-116 (LLWF…LIAF).

The protein resides in the membrane. The sequence is that of Transmembrane protein 254 (TMEM254) from Bos taurus (Bovine).